The following is a 399-amino-acid chain: Putative 8-amino-7-oxononanoate synthase (399 aa).

Arginine 24 provides a ligand contact to substrate. Residue glycine 111 to tryptophan 112 participates in pyridoxal 5'-phosphate binding. Histidine 141 is a binding site for substrate. Pyridoxal 5'-phosphate contacts are provided by residues serine 189, aspartate 214–histidine 217, and threonine 243–lysine 246. The residue at position 246 (lysine 246) is an N6-(pyridoxal phosphate)lysine. Threonine 360 provides a ligand contact to substrate.

It belongs to the class-II pyridoxal-phosphate-dependent aminotransferase family. BioF subfamily. As to quaternary structure, homodimer. Requires pyridoxal 5'-phosphate as cofactor.

It carries out the reaction 6-carboxyhexanoyl-[ACP] + L-alanine + H(+) = (8S)-8-amino-7-oxononanoate + holo-[ACP] + CO2. It participates in cofactor biosynthesis; biotin biosynthesis. Functionally, catalyzes the decarboxylative condensation of pimeloyl-[acyl-carrier protein] and L-alanine to produce 8-amino-7-oxononanoate (AON), [acyl-carrier protein], and carbon dioxide. In Bordetella bronchiseptica (strain ATCC BAA-588 / NCTC 13252 / RB50) (Alcaligenes bronchisepticus), this protein is Putative 8-amino-7-oxononanoate synthase (bioF).